A 286-amino-acid polypeptide reads, in one-letter code: Meteorin-like protein (286 aa).

The first 20 residues, 1–20 (MLRRGLLSFFMVILIDRGTS), serve as a signal peptide directing secretion. Disulfide bonds link cysteine 28–cysteine 51, cysteine 84–cysteine 120, cysteine 165–cysteine 235, cysteine 168–cysteine 259, and cysteine 178–cysteine 281. Asparagine 203 is a glycosylation site (N-linked (GlcNAc...) asparagine).

Belongs to the meteorin family.

Its subcellular location is the secreted. Hormone induced following exercise or cold exposure that promotes energy expenditure. Induced either in the skeletal muscle after exercise or in adipose tissue following cold exposure and is present in the circulation. Able to stimulate energy expenditure associated with the browning of the white fat depots and improves glucose tolerance. This is Meteorin-like protein (metrnl) from Xenopus laevis (African clawed frog).